Here is a 114-residue protein sequence, read N- to C-terminus: Iron-sulfur cluster insertion protein ErpA (114 aa).

Iron-sulfur cluster contacts are provided by C42, C106, and C108.

The protein belongs to the HesB/IscA family. As to quaternary structure, homodimer. It depends on iron-sulfur cluster as a cofactor.

Required for insertion of 4Fe-4S clusters for at least IspG. The polypeptide is Iron-sulfur cluster insertion protein ErpA (Klebsiella pneumoniae (strain 342)).